Consider the following 274-residue polypeptide: 3-methyl-2-oxobutanoate hydroxymethyltransferase (274 aa).

Positions 46 and 85 each coordinate Mg(2+). 3-methyl-2-oxobutanoate-binding positions include Asp46–Ser47, Asp85, and Lys114. Glu116 lines the Mg(2+) pocket. The active-site Proton acceptor is Glu183.

Belongs to the PanB family. Homodecamer; pentamer of dimers. Requires Mg(2+) as cofactor.

The protein resides in the cytoplasm. The enzyme catalyses 3-methyl-2-oxobutanoate + (6R)-5,10-methylene-5,6,7,8-tetrahydrofolate + H2O = 2-dehydropantoate + (6S)-5,6,7,8-tetrahydrofolate. It functions in the pathway cofactor biosynthesis; coenzyme A biosynthesis. Catalyzes the reversible reaction in which hydroxymethyl group from 5,10-methylenetetrahydrofolate is transferred onto alpha-ketoisovalerate to form ketopantoate. This is 3-methyl-2-oxobutanoate hydroxymethyltransferase from Aeropyrum pernix (strain ATCC 700893 / DSM 11879 / JCM 9820 / NBRC 100138 / K1).